The sequence spans 63 residues: UPF0337 protein Atu0782 (63 aa).

The tract at residues 1 to 63 (MGSTSDKIAG…DAVKGAVDRM (63 aa)) is disordered. Residues 51–63 (KAKDAVKGAVDRM) are compositionally biased toward basic and acidic residues.

This sequence belongs to the UPF0337 (CsbD) family.

The sequence is that of UPF0337 protein Atu0782 from Agrobacterium fabrum (strain C58 / ATCC 33970) (Agrobacterium tumefaciens (strain C58)).